The sequence spans 666 residues: Adenylylsulfate reductase subunit alpha (666 aa).

FAD is bound by residues glycine 32–glycine 35, aspartate 60–lysine 61, serine 67–alanine 69, asparagine 78, isoleucine 193, serine 259, serine 417, alanine 461–aspartate 462, and serine 472.

Belongs to the FAD-dependent oxidoreductase 2 family. As to quaternary structure, heterodimer composed of AprA and AprB. The heterodimers can dimerize to form heterotetramers. The cofactor is FAD.

It localises to the cytoplasm. The catalysed reaction is sulfite + A + AMP + 2 H(+) = adenosine 5'-phosphosulfate + AH2. Its function is as follows. Catalytic subunit of the adenylylsulfate reductase which catalyzes reversibly the reduction of adenosine 5'-phosphosulfate (APS) to sulfite and AMP during dissimilatory sulfate reduction. The sequence is that of Adenylylsulfate reductase subunit alpha from Megalodesulfovibrio gigas (strain ATCC 19364 / DSM 1382 / NCIMB 9332 / VKM B-1759) (Desulfovibrio gigas).